Consider the following 380-residue polypeptide: Putative 8-amino-7-oxononanoate synthase (380 aa).

Arg18 is a substrate binding site. Position 106–107 (106–107 (GY)) interacts with pyridoxal 5'-phosphate. Substrate is bound at residue His131. Residues Ser179, 205–208 (DEAH), and 236–239 (TFGK) contribute to the pyridoxal 5'-phosphate site. An N6-(pyridoxal phosphate)lysine modification is found at Lys239. Residue Thr352 participates in substrate binding.

This sequence belongs to the class-II pyridoxal-phosphate-dependent aminotransferase family. BioF subfamily. In terms of assembly, homodimer. It depends on pyridoxal 5'-phosphate as a cofactor.

It carries out the reaction 6-carboxyhexanoyl-[ACP] + L-alanine + H(+) = (8S)-8-amino-7-oxononanoate + holo-[ACP] + CO2. The protein operates within cofactor biosynthesis; biotin biosynthesis. Its function is as follows. Catalyzes the decarboxylative condensation of pimeloyl-[acyl-carrier protein] and L-alanine to produce 8-amino-7-oxononanoate (AON), [acyl-carrier protein], and carbon dioxide. The protein is Putative 8-amino-7-oxononanoate synthase (bioF) of Neisseria meningitidis serogroup C / serotype 2a (strain ATCC 700532 / DSM 15464 / FAM18).